The chain runs to 111 residues: uncharacterized protein (111 aa).

Transmembrane regions (helical) follow at residues 27 to 47 and 80 to 100; these read IIVL…GYKF and IFTG…ISAI.

Its subcellular location is the membrane. This is an uncharacterized protein from Acanthamoeba polyphaga (Amoeba).